A 395-amino-acid polypeptide reads, in one-letter code: Elongation factor Tu (395 aa).

In terms of domain architecture, tr-type G spans 10 to 204 (KPHVNIGTIG…AIDNWIPLPQ (195 aa)). The tract at residues 19 to 26 (GHVDHGKT) is G1. GTP is bound at residue 19–26 (GHVDHGKT). Residue T26 coordinates Mg(2+). The G2 stretch occupies residues 60–64 (GITIN). The interval 81 to 84 (DCPG) is G3. Residues 81-85 (DCPGH) and 136-139 (NKVD) each bind GTP. A G4 region spans residues 136 to 139 (NKVD). The tract at residues 174–176 (SAL) is G5.

Belongs to the TRAFAC class translation factor GTPase superfamily. Classic translation factor GTPase family. EF-Tu/EF-1A subfamily. Monomer.

It localises to the cytoplasm. It carries out the reaction GTP + H2O = GDP + phosphate + H(+). In terms of biological role, GTP hydrolase that promotes the GTP-dependent binding of aminoacyl-tRNA to the A-site of ribosomes during protein biosynthesis. The polypeptide is Elongation factor Tu (Azobacteroides pseudotrichonymphae genomovar. CFP2).